A 1261-amino-acid chain; its full sequence is ABC-type transmembrane transporter verA (1261 aa).

A helical membrane pass occupies residues 41-61 (IGCAFAAVCSGAAMPLMALIL). The region spanning 41–334 (IGCAFAAVCS…LGPNMPSFIK (294 aa)) is the ABC transmembrane type-1 1 domain. A glycan (N-linked (GlcNAc...) asparagine) is linked at asparagine 67. A run of 5 helical transmembrane segments spans residues 92 to 112 (LWFVYLFIGKFTLVYLWSFGF), 166 to 186 (LGIMIQAFSMLLASFAVAFSQ), 190 to 210 (LTLVMLGLVIITLGLIGFIVS), 270 to 290 (FVGLMFACQYFFMFVGWAIGF), and 308 to 328 (ILSVFFAMLIGLGAIMALGPN). Residues 374-618 (VELRDMSFAY…GGLYKRLYDA (245 aa)) enclose the ABC transporter 1 domain. N-linked (GlcNAc...) asparagine glycosylation is present at asparagine 396. 409–416 (GPSGAGKS) contributes to the ATP binding site. N-linked (GlcNAc...) asparagine glycosylation is present at asparagine 463. The next 6 membrane-spanning stretches (helical) occupy residues 686 to 706 (YWPIFLIGLVACVVTAQIFPV), 734 to 754 (LMFFVVGLGAMISYAILGFFM), 808 to 828 (MGLLISIFVSVISASIIGLAY), 830 to 850 (WKFALVAIFAAMPAVFAAGYL), 913 to 933 (VMTLFFAFSESVELLASALGF), and 950 to 970 (FFTVFIAVVVGGQAAGALFGF). Residues 691 to 976 (LIGLVACVVT…LFGFSSNLGK (286 aa)) form the ABC transmembrane type-1 2 domain. 2 N-linked (GlcNAc...) asparagine glycosylation sites follow: asparagine 1007 and asparagine 1021. The ABC transporter 2 domain maps to 1017 to 1255 (VDMQNVTFAY…QGNYFKMHES (239 aa)). An ATP-binding site is contributed by 1052 to 1059 (GTSGSGKS). Asparagine 1106 is a glycosylation site (N-linked (GlcNAc...) asparagine).

Belongs to the ABC transporter superfamily. ABCB family. Multidrug resistance exporter (TC 3.A.1.201) subfamily.

The protein resides in the cell membrane. In terms of biological role, ABC-type transmembrane transporter; part of the gene cluster that mediates the biosynthesis of 11'-deoxyverticillin A, one of the dimeric epipolythiodioxopiperazines (ETPs) from the verticillin family that are toxic secondary metabolites. The verA multidrug transporter is probably involved in the secretion of 11'-deoxyverticillin A. In Clonostachys rogersoniana, this protein is ABC-type transmembrane transporter verA.